The following is a 454-amino-acid chain: UDP-N-acetylmuramoyl-tripeptide--D-alanyl-D-alanine ligase (454 aa).

Position 116–122 (116–122 (GSVGKTT)) interacts with ATP.

This sequence belongs to the MurCDEF family. MurF subfamily.

It is found in the cytoplasm. It catalyses the reaction D-alanyl-D-alanine + UDP-N-acetyl-alpha-D-muramoyl-L-alanyl-gamma-D-glutamyl-meso-2,6-diaminopimelate + ATP = UDP-N-acetyl-alpha-D-muramoyl-L-alanyl-gamma-D-glutamyl-meso-2,6-diaminopimeloyl-D-alanyl-D-alanine + ADP + phosphate + H(+). Its pathway is cell wall biogenesis; peptidoglycan biosynthesis. Functionally, involved in cell wall formation. Catalyzes the final step in the synthesis of UDP-N-acetylmuramoyl-pentapeptide, the precursor of murein. This chain is UDP-N-acetylmuramoyl-tripeptide--D-alanyl-D-alanine ligase, found in Synechocystis sp. (strain ATCC 27184 / PCC 6803 / Kazusa).